We begin with the raw amino-acid sequence, 76 residues long: Acyl carrier protein (76 aa).

Residues 1 to 76 (MSVEEKISKI…DAIAYIKNKQ (76 aa)) enclose the Carrier domain. Ser36 carries the post-translational modification O-(pantetheine 4'-phosphoryl)serine.

The protein belongs to the acyl carrier protein (ACP) family. 4'-phosphopantetheine is transferred from CoA to a specific serine of apo-ACP by AcpS. This modification is essential for activity because fatty acids are bound in thioester linkage to the sulfhydryl of the prosthetic group.

It localises to the cytoplasm. It functions in the pathway lipid metabolism; fatty acid biosynthesis. Carrier of the growing fatty acid chain in fatty acid biosynthesis. The chain is Acyl carrier protein from Nitratidesulfovibrio vulgaris (strain DSM 19637 / Miyazaki F) (Desulfovibrio vulgaris).